The chain runs to 378 residues: WUSCHEL-related homeobox 9 (378 aa).

2 disordered regions span residues 1–60 (MASS…NPKP) and 123–173 (KHSL…GSQM). Positions 32–42 (SASHRSSPFSS) are enriched in low complexity. The span at 45 to 54 (EVERSPEPKP) shows a compositional bias: basic and acidic residues. The segment at residues 51-115 (EPKPRWNPKP…NRKSRSKHKL (65 aa)) is a DNA-binding region (homeobox; WUS-type). Low complexity-rich tracts occupy residues 137-152 (PSAS…SSKS) and 161-171 (KNNTNLSLGGS).

This sequence belongs to the WUS homeobox family. In terms of tissue distribution, expressed in the basal cell and later at the boundary between suspensor and proembryo. Expressed at low levels in proliferating tissues post embryonically. Detected in vegetative shoot apical meristem, leaf primordia, floral meristems, emerging floral organs, epidermal layer of the placenta and in the upper portion of the root meristematic zone.

The protein resides in the nucleus. Its subcellular location is the cytoplasm. In terms of biological role, homeodomain transcription factor required for meristem growth and early development. Promotes cell proliferation and prevents premature differentiation in meristematic tissues during postembryonic development. Essential for maintaining tissue growth during embryogenesis. May act by repressing TSS to promote meristematic proliferation. Involved in the transcriptional activation of a subset of cytokinin response factors. May act as a negative regulator of cytokinin signaling in the dark. This Arabidopsis thaliana (Mouse-ear cress) protein is WUSCHEL-related homeobox 9.